We begin with the raw amino-acid sequence, 311 residues long: Tryptophan 2,3-dioxygenase (311 aa).

A disordered region spans residues 1 to 37 (MQPPGGDAPAGCPFSGARAAQPAQAAHEAPHVPGEAD). The span at 17 to 27 (ARAAQPAQAAH) shows a compositional bias: low complexity. Substrate-binding positions include 80 to 84 (FIIQH), tyrosine 142, and arginine 146. Heme is bound at residue histidine 269. A substrate-binding site is contributed by threonine 283.

This sequence belongs to the tryptophan 2,3-dioxygenase family. As to quaternary structure, homotetramer. Heme is required as a cofactor.

The enzyme catalyses L-tryptophan + O2 = N-formyl-L-kynurenine. Its pathway is amino-acid degradation; L-tryptophan degradation via kynurenine pathway; L-kynurenine from L-tryptophan: step 1/2. Functionally, heme-dependent dioxygenase that catalyzes the oxidative cleavage of the L-tryptophan (L-Trp) pyrrole ring and converts L-tryptophan to N-formyl-L-kynurenine. Catalyzes the oxidative cleavage of the indole moiety. The polypeptide is Tryptophan 2,3-dioxygenase (Burkholderia cenocepacia (strain ATCC BAA-245 / DSM 16553 / LMG 16656 / NCTC 13227 / J2315 / CF5610) (Burkholderia cepacia (strain J2315))).